The sequence spans 342 residues: N-acetyl-gamma-glutamyl-phosphate reductase (342 aa).

The active site involves cysteine 149.

The protein belongs to the NAGSA dehydrogenase family. Type 1 subfamily.

The protein localises to the cytoplasm. It carries out the reaction N-acetyl-L-glutamate 5-semialdehyde + phosphate + NADP(+) = N-acetyl-L-glutamyl 5-phosphate + NADPH + H(+). Its pathway is amino-acid biosynthesis; L-arginine biosynthesis; N(2)-acetyl-L-ornithine from L-glutamate: step 3/4. Catalyzes the NADPH-dependent reduction of N-acetyl-5-glutamyl phosphate to yield N-acetyl-L-glutamate 5-semialdehyde. In Thiobacillus denitrificans (strain ATCC 25259 / T1), this protein is N-acetyl-gamma-glutamyl-phosphate reductase.